The following is a 263-amino-acid chain: Small ribosomal subunit protein eS4 (263 aa).

Residues 42 to 104 form the S4 RNA-binding domain; the sequence is LPLIIFLRNR…TGEHFRLVYD (63 aa).

It belongs to the eukaryotic ribosomal protein eS4 family. Component of the small ribosomal subunit.

The protein localises to the cytoplasm. In terms of biological role, component of the small ribosomal subunit. The ribosome is a large ribonucleoprotein complex responsible for the synthesis of proteins in the cell. In Xenopus tropicalis (Western clawed frog), this protein is Small ribosomal subunit protein eS4 (rps4).